Reading from the N-terminus, the 69-residue chain is uncharacterized protein (69 aa).

2 disordered regions span residues 1 to 32 (MSAP…GWGD) and 44 to 69 (QSDA…APSD). 2 stretches are compositionally biased toward basic and acidic residues: residues 7–32 (NLDR…GWGD) and 46–69 (DADK…APSD).

This is an uncharacterized protein from Schizosaccharomyces pombe (strain 972 / ATCC 24843) (Fission yeast).